Consider the following 107-residue polypeptide: V-type proton ATPase subunit G (107 aa).

It belongs to the V-ATPase G subunit family. In terms of assembly, V-ATPase is a heteromultimeric enzyme composed of a peripheral catalytic V1 complex (components A to H) attached to an integral membrane V0 proton pore complex (components: a, c, c', c'' and d).

Catalytic subunit of the peripheral V1 complex of vacuolar ATPase (V-ATPase). V-ATPase is responsible for acidifying a variety of intracellular compartments in eukaryotic cells. In Dictyostelium discoideum (Social amoeba), this protein is V-type proton ATPase subunit G (atp6v1g).